A 341-amino-acid chain; its full sequence is ATP-dependent 6-phosphofructokinase 2 (341 aa).

ATP contacts are provided by residues glycine 10, 72–73 (RL), and 102–105 (GEGT). Mg(2+) is bound at residue glutamate 103. Substrate contacts are provided by residues 125–127 (TID), arginine 162, 169–171 (MGR), glutamate 222, lysine 266, and 272–275 (HVQR). The Proton acceptor role is filled by aspartate 127.

The protein belongs to the phosphofructokinase type A (PFKA) family. Mixed-substrate PFK group III subfamily. In terms of assembly, homodimer or homotetramer. Requires Mg(2+) as cofactor.

The protein resides in the cytoplasm. The enzyme catalyses beta-D-fructose 6-phosphate + ATP = beta-D-fructose 1,6-bisphosphate + ADP + H(+). The protein operates within carbohydrate degradation; glycolysis; D-glyceraldehyde 3-phosphate and glycerone phosphate from D-glucose: step 3/4. Its activity is regulated as follows. Allosterically inhibited by phosphoenolpyruvate. In terms of biological role, catalyzes the phosphorylation of D-fructose 6-phosphate to fructose 1,6-bisphosphate by ATP, the first committing step of glycolysis. The chain is ATP-dependent 6-phosphofructokinase 2 from Streptomyces coelicolor (strain ATCC BAA-471 / A3(2) / M145).